Here is a 308-residue protein sequence, read N- to C-terminus: D-alanine--D-alanine ligase (308 aa).

Positions 102–302 (KKVAAAAGIP…FGDLVSWMVE (201 aa)) constitute an ATP-grasp domain. 128-183 (PLQPPYVVKPVREGSSFGVVIVKEDQSHPPQILTSSEWPFGNQVMVERYIHGRELT) lines the ATP pocket. Mg(2+) is bound by residues D252, E269, and N271.

The protein belongs to the D-alanine--D-alanine ligase family. Requires Mg(2+) as cofactor. Mn(2+) is required as a cofactor.

It is found in the cytoplasm. It catalyses the reaction 2 D-alanine + ATP = D-alanyl-D-alanine + ADP + phosphate + H(+). It functions in the pathway cell wall biogenesis; peptidoglycan biosynthesis. Functionally, cell wall formation. The sequence is that of D-alanine--D-alanine ligase from Agrobacterium fabrum (strain C58 / ATCC 33970) (Agrobacterium tumefaciens (strain C58)).